Consider the following 203-residue polypeptide: TATA-binding protein 2 (203 aa).

2 consecutive repeat copies span residues 28 to 104 and 118 to 195.

It belongs to the TBP family. Belongs to the TFIID complex together with the TBP-associated factors (TAFs). Binds DNA as monomer. Interacts with RF2A and TFIIB. Interacts with CWZF7.

Its subcellular location is the nucleus. In terms of biological role, general transcription factor that functions at the core of the DNA-binding multiprotein factor TFIID. Binding of TFIID to the TATA box is the initial transcriptional step of the pre-initiation complex (PIC), playing a role in the activation of eukaryotic genes transcribed by RNA polymerase II. This Oryza sativa subsp. japonica (Rice) protein is TATA-binding protein 2 (TBP2).